Here is a 146-residue protein sequence, read N- to C-terminus: Hemoglobin subunit beta-2 (146 aa).

A Globin domain is found at 2–146 (EWTDFERATI…VVSALGRQYH (145 aa)). Heme b contacts are provided by H63 and H92.

It belongs to the globin family. In terms of assembly, hb3 is a heterotetramer of two alpha-2 chains and two beta-2 chains. As to expression, red blood cells.

Its function is as follows. Involved in oxygen transport from gills to the various peripheral tissues. The polypeptide is Hemoglobin subunit beta-2 (hbb2) (Anarhichas minor (Arctic spotted wolffish)).